A 204-amino-acid polypeptide reads, in one-letter code: Holliday junction resolvase RecU (204 aa).

4 residues coordinate Mg(2+): Thr89, Asp91, Asp104, and Gln123.

The protein belongs to the RecU family. Mg(2+) serves as cofactor.

Its subcellular location is the cytoplasm. It carries out the reaction Endonucleolytic cleavage at a junction such as a reciprocal single-stranded crossover between two homologous DNA duplexes (Holliday junction).. Its function is as follows. Endonuclease that resolves Holliday junction intermediates in genetic recombination. Cleaves mobile four-strand junctions by introducing symmetrical nicks in paired strands. Promotes annealing of linear ssDNA with homologous dsDNA. Required for DNA repair, homologous recombination and chromosome segregation. The chain is Holliday junction resolvase RecU from Leuconostoc mesenteroides subsp. mesenteroides (strain ATCC 8293 / DSM 20343 / BCRC 11652 / CCM 1803 / JCM 6124 / NCDO 523 / NBRC 100496 / NCIMB 8023 / NCTC 12954 / NRRL B-1118 / 37Y).